Consider the following 296-residue polypeptide: Mitochondrial arginine transporter BAC2 (296 aa).

Solcar repeat units lie at residues 13-93, 104-187, and 198-282; these read GREF…FSRS, PSYR…VRER, and ENLR…ALRC. Helical transmembrane passes span 16-36, 70-90, 110-130, 162-181, 204-224, and 260-280; these read FVAG…LDTL, AAPL…YAIF, ALGG…VELI, GLTI…FWTY, LVAG…LDVV, and TAVA…EVAL.

This sequence belongs to the mitochondrial carrier (TC 2.A.29) family. High expression in flowers, stamens, petals and pollen. Expressed in roots, leaves and stems.

It is found in the mitochondrion inner membrane. Inhibited by mercuric chloride. Functionally, mitochondrial arginine transporter that catalyzes the counter-exchange of arginine with lysine, ornithine, arginine, histidine and citrulline. Substrate preference in reconstituted proteoliposomes is arginine &gt; homoarginine &gt; citrulline &gt; histidine &gt; lysine &gt; ornithine. May be involved in the delivery of arginine, released from seed reserves, to mitochondrial arginase and the export of ornithine. May contribute to proline accumulation in response to hyperosmotic stress. The chain is Mitochondrial arginine transporter BAC2 (BAC2) from Arabidopsis thaliana (Mouse-ear cress).